Consider the following 237-residue polypeptide: Ribose-5-phosphate isomerase A (237 aa).

Residues 33-36 (TGST), 90-93 (DGAD), and 103-106 (KGGG) each bind substrate. Glutamate 112 (proton acceptor) is an active-site residue. Lysine 130 serves as a coordination point for substrate.

Belongs to the ribose 5-phosphate isomerase family. Homodimer.

The enzyme catalyses aldehydo-D-ribose 5-phosphate = D-ribulose 5-phosphate. It functions in the pathway carbohydrate degradation; pentose phosphate pathway; D-ribose 5-phosphate from D-ribulose 5-phosphate (non-oxidative stage): step 1/1. Catalyzes the reversible conversion of ribose-5-phosphate to ribulose 5-phosphate. This Trichodesmium erythraeum (strain IMS101) protein is Ribose-5-phosphate isomerase A.